A 150-amino-acid chain; its full sequence is D-aminoacyl-tRNA deacylase (150 aa).

Residues 138 to 139 (GP) carry the Gly-cisPro motif, important for rejection of L-amino acids motif.

Belongs to the DTD family. In terms of assembly, homodimer.

The protein resides in the cytoplasm. It carries out the reaction glycyl-tRNA(Ala) + H2O = tRNA(Ala) + glycine + H(+). It catalyses the reaction a D-aminoacyl-tRNA + H2O = a tRNA + a D-alpha-amino acid + H(+). An aminoacyl-tRNA editing enzyme that deacylates mischarged D-aminoacyl-tRNAs. Also deacylates mischarged glycyl-tRNA(Ala), protecting cells against glycine mischarging by AlaRS. Acts via tRNA-based rather than protein-based catalysis; rejects L-amino acids rather than detecting D-amino acids in the active site. By recycling D-aminoacyl-tRNA to D-amino acids and free tRNA molecules, this enzyme counteracts the toxicity associated with the formation of D-aminoacyl-tRNA entities in vivo and helps enforce protein L-homochirality. This is D-aminoacyl-tRNA deacylase from Opitutus terrae (strain DSM 11246 / JCM 15787 / PB90-1).